Here is a 222-residue protein sequence, read N- to C-terminus: LexA repressor (222 aa).

The segment at residues 28-48 is a DNA-binding region (H-T-H motif); it reads IREIGEHMDIRSTNGVNDHLK. Active-site for autocatalytic cleavage activity residues include Ser135 and Lys172.

The protein belongs to the peptidase S24 family. As to quaternary structure, homodimer.

It catalyses the reaction Hydrolysis of Ala-|-Gly bond in repressor LexA.. In terms of biological role, represses a number of genes involved in the response to DNA damage (SOS response), including recA and lexA. In the presence of single-stranded DNA, RecA interacts with LexA causing an autocatalytic cleavage which disrupts the DNA-binding part of LexA, leading to derepression of the SOS regulon and eventually DNA repair. This Myxococcus xanthus (strain DK1622) protein is LexA repressor.